The primary structure comprises 213 residues: Probable transaldolase (213 aa).

Lysine 83 functions as the Schiff-base intermediate with substrate in the catalytic mechanism.

It belongs to the transaldolase family. Type 3B subfamily.

Its subcellular location is the cytoplasm. The catalysed reaction is D-sedoheptulose 7-phosphate + D-glyceraldehyde 3-phosphate = D-erythrose 4-phosphate + beta-D-fructose 6-phosphate. It participates in carbohydrate degradation; pentose phosphate pathway; D-glyceraldehyde 3-phosphate and beta-D-fructose 6-phosphate from D-ribose 5-phosphate and D-xylulose 5-phosphate (non-oxidative stage): step 2/3. Transaldolase is important for the balance of metabolites in the pentose-phosphate pathway. This is Probable transaldolase from Geobacillus thermodenitrificans (strain NG80-2).